Reading from the N-terminus, the 273-residue chain is Dermonecrotic toxin LdSicTox-alphaIB3aii (273 aa).

Residue H5 is part of the active site. Residues E25 and D27 each coordinate Mg(2+). H41 acts as the Nucleophile in catalysis. Disulfide bonds link C45/C51 and C47/C190. D85 provides a ligand contact to Mg(2+).

The protein belongs to the arthropod phospholipase D family. Class II subfamily. It depends on Mg(2+) as a cofactor. Expressed by the venom gland.

It is found in the secreted. It catalyses the reaction an N-(acyl)-sphingosylphosphocholine = an N-(acyl)-sphingosyl-1,3-cyclic phosphate + choline. The enzyme catalyses an N-(acyl)-sphingosylphosphoethanolamine = an N-(acyl)-sphingosyl-1,3-cyclic phosphate + ethanolamine. It carries out the reaction a 1-acyl-sn-glycero-3-phosphocholine = a 1-acyl-sn-glycero-2,3-cyclic phosphate + choline. The catalysed reaction is a 1-acyl-sn-glycero-3-phosphoethanolamine = a 1-acyl-sn-glycero-2,3-cyclic phosphate + ethanolamine. In terms of biological role, dermonecrotic toxins cleave the phosphodiester linkage between the phosphate and headgroup of certain phospholipids (sphingolipid and lysolipid substrates), forming an alcohol (often choline) and a cyclic phosphate. This toxin acts on sphingomyelin (SM). It may also act on ceramide phosphoethanolamine (CPE), lysophosphatidylcholine (LPC) and lysophosphatidylethanolamine (LPE), but not on lysophosphatidylserine (LPS), and lysophosphatidylglycerol (LPG). It acts by transphosphatidylation, releasing exclusively cyclic phosphate products as second products. Induces dermonecrosis, hemolysis, increased vascular permeability, edema, inflammatory response, and platelet aggregation. The polypeptide is Dermonecrotic toxin LdSicTox-alphaIB3aii (Loxosceles deserta (Desert recluse spider)).